We begin with the raw amino-acid sequence, 740 residues long: ATP-dependent RNA helicase DBP4 (740 aa).

The disordered stretch occupies residues 1–37 (MKKRADPRKIKREEHKQKLSKLQERVDNFGEDEADKE). Basic and acidic residues predominate over residues 7-28 (PRKIKREEHKQKLSKLQERVDN). The short motif at 39-67 (SKFEELPLSEATIEGLKNSHYVTCTDVQK) is the Q motif element. The region spanning 70–244 (IPPALQGHDL…RLSLADPKYI (175 aa)) is the Helicase ATP-binding domain. An ATP-binding site is contributed by 83–90 (ARTGSGKT). A DEAD box motif is present at residues 192–195 (DEAD). A Helicase C-terminal domain is found at 257 to 421 (NLEQNYVCVE…TIRPNKKKSI (165 aa)). Residues 565–740 (RQDHNLESDD…ESLTSKLLKK (176 aa)) are disordered. Over residues 636–662 (QVKEFVDRETKDMEEADVGDKELVKQK) the composition is skewed to basic and acidic residues. Acidic residues-rich tracts occupy residues 680 to 695 (DEYD…SEEE) and 709 to 731 (SSDE…EDLE).

This sequence belongs to the DEAD box helicase family. DDX10/DBP4 subfamily. As to quaternary structure, interacts with the U3 and U14 snoRNAs. Associates with pre-ribosomal complexes.

The protein localises to the nucleus. The protein resides in the nucleolus. The catalysed reaction is ATP + H2O = ADP + phosphate + H(+). In terms of biological role, ATP-dependent RNA helicase required for ribosome biogenesis. Involved in the release of U14 snoRNA in pre-ribosomal complexes. Required for pre-rRNA cleavage at site A2. This Yarrowia lipolytica (strain CLIB 122 / E 150) (Yeast) protein is ATP-dependent RNA helicase DBP4 (DBP4).